The sequence spans 263 residues: Ribonuclease HII (263 aa).

Residues 74-262 (EHVAGLDEVG…VQETAATRQT (189 aa)) enclose the RNase H type-2 domain. Residues Asp-80, Glu-81, and Asp-172 each contribute to the a divalent metal cation site.

This sequence belongs to the RNase HII family. The cofactor is Mn(2+). Mg(2+) serves as cofactor.

It is found in the cytoplasm. It catalyses the reaction Endonucleolytic cleavage to 5'-phosphomonoester.. Endonuclease that specifically degrades the RNA of RNA-DNA hybrids. The polypeptide is Ribonuclease HII (rnhB) (Halalkalibacterium halodurans (strain ATCC BAA-125 / DSM 18197 / FERM 7344 / JCM 9153 / C-125) (Bacillus halodurans)).